A 263-amino-acid polypeptide reads, in one-letter code: Pyruvate formate-lyase-activating enzyme (263 aa).

One can recognise a Radical SAM core domain in the interval 23–260; the sequence is VDGPGIRFVV…TETYEEYKKR (238 aa). [4Fe-4S] cluster contacts are provided by C37, C41, and C44. Residues 43–45, G87, 142–144, and H215 each bind S-adenosyl-L-methionine; these read YCH and DIK.

The protein belongs to the organic radical-activating enzymes family. [4Fe-4S] cluster is required as a cofactor.

Its subcellular location is the cytoplasm. It catalyses the reaction glycyl-[formate C-acetyltransferase] + reduced [flavodoxin] + S-adenosyl-L-methionine = glycin-2-yl radical-[formate C-acetyltransferase] + semiquinone [flavodoxin] + 5'-deoxyadenosine + L-methionine + H(+). In terms of biological role, activation of pyruvate formate-lyase under anaerobic conditions by generation of an organic free radical, using S-adenosylmethionine and reduced flavodoxin as cosubstrates to produce 5'-deoxy-adenosine. This Streptococcus mutans serotype c (strain ATCC 700610 / UA159) protein is Pyruvate formate-lyase-activating enzyme (act).